The chain runs to 530 residues: Type 2 DNA topoisomerase 6 subunit B (530 aa).

ATP is bound by residues Asn42, Asp76, 97 to 98 (SK), 106 to 113 (GMYGLGVK), and Lys427.

It belongs to the TOP6B family. As to quaternary structure, homodimer. Heterotetramer of two Top6A and two Top6B chains.

The catalysed reaction is ATP-dependent breakage, passage and rejoining of double-stranded DNA.. Its function is as follows. Relaxes both positive and negative superturns and exhibits a strong decatenase activity. This Saccharolobus islandicus (strain Y.N.15.51 / Yellowstone #2) (Sulfolobus islandicus) protein is Type 2 DNA topoisomerase 6 subunit B.